The chain runs to 694 residues: Elongation factor G (694 aa).

The tr-type G domain occupies 9–288 (SKIRNIGIMA…VIVKWLPSPK (280 aa)). GTP is bound by residues 18–25 (AHIDAGKT), 82–86 (DTPGH), and 136–139 (NKMD).

The protein belongs to the TRAFAC class translation factor GTPase superfamily. Classic translation factor GTPase family. EF-G/EF-2 subfamily.

The protein localises to the cytoplasm. Its function is as follows. Catalyzes the GTP-dependent ribosomal translocation step during translation elongation. During this step, the ribosome changes from the pre-translocational (PRE) to the post-translocational (POST) state as the newly formed A-site-bound peptidyl-tRNA and P-site-bound deacylated tRNA move to the P and E sites, respectively. Catalyzes the coordinated movement of the two tRNA molecules, the mRNA and conformational changes in the ribosome. This is Elongation factor G from Chlamydia felis (strain Fe/C-56) (Chlamydophila felis).